The following is a 345-amino-acid chain: Twinfilin (345 aa).

2 ADF-H domains span residues 4–139 (QTGI…KHKR) and 177–312 (GISC…DELH). Residues 320–345 (PAFAKPKGPPNRGAKRLTRPSNEDQV) form a disordered region.

The protein belongs to the actin-binding proteins ADF family. Twinfilin subfamily. Interacts with G-actin; ADP-actin form.

It is found in the cytoplasm. The protein localises to the cytoskeleton. Its subcellular location is the cell cortex. Functionally, actin-binding protein involved in motile and morphological processes. Inhibits actin polymerization, likely by sequestering G-actin. The polypeptide is Twinfilin (twf) (Drosophila pseudoobscura pseudoobscura (Fruit fly)).